The sequence spans 499 residues: Tetrathionate hydrolase (499 aa).

The first 32 residues, 1-32 (MPSIVRNHGPHNKILLSALLLALFGWVPLASA), serve as a signal peptide directing secretion.

This sequence belongs to the tetrathionate hydrolase family. Homodimer.

Its subcellular location is the cell membrane. It catalyses the reaction tetrathionate + H2O = sulfur + thiosulfate + sulfate + H(+). Functionally, catalyzes the hydrolysis of tetrathionate to generate elemental sulfur, thiosulfate and sulfate. The chain is Tetrathionate hydrolase from Acidithiobacillus ferrooxidans (strain ATCC 23270 / DSM 14882 / CIP 104768 / NCIMB 8455) (Ferrobacillus ferrooxidans (strain ATCC 23270)).